Consider the following 283-residue polypeptide: Adenylate dimethylallyltransferase (283 aa).

It belongs to the isopentenyl transferase family.

It catalyses the reaction dimethylallyl diphosphate + AMP = N(6)-(dimethylallyl)adenosine 5'-phosphate + diphosphate. Functionally, transfers dimethylallyl groups to AMP as part of the biosynthesis of cytokinin phytohormones like isopentenyl adenine or discadenine which controle spore formation and viability. This is Adenylate dimethylallyltransferase (iptA) from Dictyostelium discoideum (Social amoeba).